The following is a 174-amino-acid chain: Adenine phosphoribosyltransferase (174 aa).

This sequence belongs to the purine/pyrimidine phosphoribosyltransferase family. In terms of assembly, homodimer.

The protein resides in the cytoplasm. The enzyme catalyses AMP + diphosphate = 5-phospho-alpha-D-ribose 1-diphosphate + adenine. It functions in the pathway purine metabolism; AMP biosynthesis via salvage pathway; AMP from adenine: step 1/1. Functionally, catalyzes a salvage reaction resulting in the formation of AMP, that is energically less costly than de novo synthesis. This chain is Adenine phosphoribosyltransferase, found in Mycolicibacterium vanbaalenii (strain DSM 7251 / JCM 13017 / BCRC 16820 / KCTC 9966 / NRRL B-24157 / PYR-1) (Mycobacterium vanbaalenii).